Here is a 219-residue protein sequence, read N- to C-terminus: N-(5'-phosphoribosyl)anthranilate isomerase (219 aa).

The protein belongs to the TrpF family.

The catalysed reaction is N-(5-phospho-beta-D-ribosyl)anthranilate = 1-(2-carboxyphenylamino)-1-deoxy-D-ribulose 5-phosphate. The protein operates within amino-acid biosynthesis; L-tryptophan biosynthesis; L-tryptophan from chorismate: step 3/5. This Mesorhizobium japonicum (strain LMG 29417 / CECT 9101 / MAFF 303099) (Mesorhizobium loti (strain MAFF 303099)) protein is N-(5'-phosphoribosyl)anthranilate isomerase.